The sequence spans 575 residues: G2/mitotic-specific cyclin-B3 (575 aa).

Residues 75–83 (RSALGNLTN) carry the D-box motif. A Phosphoserine modification is found at serine 215.

This sequence belongs to the cyclin family. Cyclin AB subfamily. Interacts with Cdk1 kinase. In terms of processing, ubiquitinated. Ubiquitination leads to its degradation in early anaphase. As to expression, in embryo, it is expressed in all mitotically proliferating cells, with a high level in neuroblasts. Not expressed in old embryos and thereafter. Not expressed in endoreplicating tissues.

Its subcellular location is the nucleus. Its function is as follows. Cyclins are positive regulatory subunits of the cyclin-dependent kinases (CDKs), and thereby play an essential role in the control of the cell cycle, notably via their destruction during cell division. Probably functions redundantly with other cyclins in regulation of cell cycle. Its presence may be required to delay a deadline for completing cytokinesis that is ordinary imposed by nuclear envelope reformation. Degradation of CycB and CycB3 promote cytokinesis furrow initiation and ingression. Required with CycB for female fertility. This chain is G2/mitotic-specific cyclin-B3 (CycB3), found in Drosophila melanogaster (Fruit fly).